The sequence spans 453 residues: Insulinoma-associated protein 1b (453 aa).

The SNAG domain stretch occupies residues 1 to 20 (MPKGFLVKRNKKAALVSYRI). Residues 140–179 (NSNRSGTASGAHAPAIQTGAKRPSADAAERKVSSKSAKKP) form a disordered region. The segment covering 162-171 (PSADAAERKV) has biased composition (basic and acidic residues). The C2H2-type 1 zinc finger occupies 252-274 (YRCPECEKVFSCPANLASHRRWH). The tract at residues 298–318 (AEFPSDRDTPSPGLSESGSED) is disordered. 3 C2H2-type zinc fingers span residues 321 to 343 (YDCQ…ILGH), 383 to 406 (LTCP…RLLH), and 412 to 435 (FPCK…NKCH).

Belongs to the INSM1 family.

It is found in the nucleus. Functionally, may act as a transcriptional regulator. May play a role in neurogenesis and neuroendocrine cell differentiation during embryonic development. In Danio rerio (Zebrafish), this protein is Insulinoma-associated protein 1b (insm1b).